The sequence spans 631 residues: Sphingomyelin phosphodiesterase (631 aa).

The tract at residues 1-23 (MPRYGASLRQSCPRSGREQGQDG) is disordered. The signal sequence occupies residues 1 to 46 (MPRYGASLRQSCPRSGREQGQDGTAGAPGLLWMGLVLALALALALA). A Saposin B-type domain is found at 87 to 171 (GNLTCPICKG…LLGSTCGHWD (85 aa)). Residue Asn88 is glycosylated (N-linked (GlcNAc...) asparagine). Intrachain disulfides connect Cys91–Cys167, Cys94–Cys159, and Cys122–Cys133. An N-linked (GlcNAc...) asparagine glycan is attached at Asn177. Asp208 and His210 together coordinate Zn(2+). Cystine bridges form between Cys223–Cys228 and Cys229–Cys252. Residues Asp280 and Asn320 each contribute to the Zn(2+) site. 2 N-linked (GlcNAc...) asparagine glycosylation sites follow: Asn337 and Asn397. A disulfide bond links Cys387 and Cys433. Zn(2+) contacts are provided by His427, His459, and His461. Asn505 is a glycosylation site (N-linked (GlcNAc...) asparagine). Ser510 is modified (phosphoserine; by PKC/PRKCD). N-linked (GlcNAc...) asparagine glycosylation is present at Asn522. Intrachain disulfides connect Cys586–Cys590 and Cys596–Cys609.

Belongs to the acid sphingomyelinase family. As to quaternary structure, monomer. Interacts with SORT1; the interaction is required for SMPD1 targeting to lysosomes. It depends on Zn(2+) as a cofactor. In terms of processing, proteolytically processed. Mature lysosomal form arises from C-terminal proteolytic processing of pro-sphingomyelin phosphodiesterase. This form is generated following cleavage by CASP7 in the extracellular milieu. It shows increased activity. Post-translationally, both lysosomal and secreted forms are glycosylated but they show a differential pattern of glycosylation. In terms of processing, phosphorylated at Ser-510 by PRKCD upon stress stimuli. Phosphorylation is required for secretion.

It is found in the lysosome. The protein localises to the lipid droplet. Its subcellular location is the secreted. The protein resides in the extracellular space. The enzyme catalyses a sphingomyelin + H2O = phosphocholine + an N-acylsphing-4-enine + H(+). The catalysed reaction is N-(octadecanoyl)-sphing-4-enine-1-phosphocholine + H2O = N-octadecanoylsphing-4-enine + phosphocholine + H(+). It catalyses the reaction 1,2-dihexadecanoyl-sn-glycero-3-phosphocholine + H2O = 1,2-dihexadecanoyl-sn-glycerol + phosphocholine + H(+). It carries out the reaction a 1,2-diacyl-sn-glycero-3-phosphocholine + H2O = phosphocholine + a 1,2-diacyl-sn-glycerol + H(+). Its activity is regulated as follows. Hydrolysis of liposomal sphingomyelin is stimulated by incorporation of diacylglycerol (DAG), ceramide and free fatty acids into the liposomal membranes. Phosphatidylcholine hydrolysis is inhibited by incorporation of cholesterol, ceramide, DAG, monoacylglycerol and fatty acids. Antidepressants, namely amitriptyline, imipramine, desipramine, fluoxetine, sertraline, escitalopram, and maprotiline inhibit sphingomyelin phosphodiesterase activity. With respect to regulation, (Microbial infection) The secretory form is activated by P.aeruginosa, this activation results in the release of ceramide in the outer leaflet of the plasma membrane. (Microbial infection) The secretory form is activated by human coronavirus SARS-CoV-2, this activation results in the release of ceramide in the outer leaflet of the plasma membrane. In terms of biological role, converts sphingomyelin to ceramide. Exists as two enzymatic forms that arise from alternative trafficking of a single protein precursor, one that is targeted to the endolysosomal compartment, whereas the other is released extracellularly. However, in response to various forms of stress, lysosomal exocytosis may represent a major source of the secretory form. In the lysosomes, converts sphingomyelin to ceramide. Plays an important role in the export of cholesterol from the intraendolysosomal membranes. Also has phospholipase C activities toward 1,2-diacylglycerolphosphocholine and 1,2-diacylglycerolphosphoglycerol. Modulates stress-induced apoptosis through the production of ceramide. Functionally, when secreted, modulates cell signaling with its ability to reorganize the plasma membrane by converting sphingomyelin to ceramide. Secreted form is increased in response to stress and inflammatory mediators such as IL1B, IFNG or TNF as well as upon infection with bacteria and viruses. Produces the release of ceramide in the outer leaflet of the plasma membrane playing a central role in host defense. Ceramide reorganizes these rafts into larger signaling platforms that are required to internalize P.aeruginosa, induce apoptosis and regulate the cytokine response in infected cells. In wounded cells, the lysosomal form is released extracellularly in the presence of Ca(2+) and promotes endocytosis and plasma membrane repair. Its function is as follows. This form is generated following cleavage by CASP7 in the extracellular milieu in response to bacterial infection. It shows increased ability to convert sphingomyelin to ceramide and promotes plasma membrane repair. Plasma membrane repair by ceramide counteracts the action of gasdermin-D (GSDMD) perforin (PRF1) pores that are formed in response to bacterial infection. In terms of biological role, (Microbial infection) Secretion is activated by bacteria such as P.aeruginosa, N.gonorrhoeae and others, this activation results in the release of ceramide in the outer leaflet of the plasma membrane which facilitates the infection. (Microbial infection) Secretion is activated by human coronaviruses SARS-CoV and SARS-CoV-2 as well as Zaire ebolavirus, this activation results in the release of ceramide in the outer leaflet of the plasma membrane which facilitates the infection. Functionally, lacks residues that bind the cofactor Zn(2+) and has no enzyme activity. This is Sphingomyelin phosphodiesterase from Homo sapiens (Human).